The chain runs to 362 residues: Serine/threonine-protein kinase SBK2 (362 aa).

Over residues M1–M11 the composition is skewed to basic and acidic residues. The disordered stretch occupies residues M1–G20. Residues Y62–K330 form the Protein kinase domain. Residues L68–V76 and K91 contribute to the ATP site. The active-site Proton acceptor is D183. The segment at P317 to C362 is disordered. Residues K330–S348 show a composition bias toward basic and acidic residues.

The protein belongs to the protein kinase superfamily. Ser/Thr protein kinase family. STKL subfamily.

It catalyses the reaction L-seryl-[protein] + ATP = O-phospho-L-seryl-[protein] + ADP + H(+). It carries out the reaction L-threonyl-[protein] + ATP = O-phospho-L-threonyl-[protein] + ADP + H(+). This Rattus norvegicus (Rat) protein is Serine/threonine-protein kinase SBK2 (Sbk2).